We begin with the raw amino-acid sequence, 762 residues long: uncharacterized protein (762 aa).

The segment at 1-26 (MENLKSASPEEDSPRHGDNMGKPKRI) is disordered. Positions 12 to 21 (DSPRHGDNMG) are enriched in basic and acidic residues. Residues 30–57 (CDMCRKRKIRCDGKQPACSNCVSHGIPC) constitute a DNA-binding region (zn(2)-C6 fungal-type). The disordered stretch occupies residues 647-668 (QSHVPPRISSNHSDTSVKSNSP).

Its subcellular location is the nucleus. This is an uncharacterized protein from Schizosaccharomyces pombe (strain 972 / ATCC 24843) (Fission yeast).